A 249-amino-acid polypeptide reads, in one-letter code: Elongator complex protein 6 homolog (249 aa).

This sequence belongs to the ELP6 family. In terms of assembly, component of the elongator complex.

It is found in the cytoplasm. It localises to the nucleus. It participates in tRNA modification; 5-methoxycarbonylmethyl-2-thiouridine-tRNA biosynthesis. Functionally, component of the elongator complex which is required for multiple tRNA modifications, including mcm5U (5-methoxycarbonylmethyl uridine), mcm5s2U (5-methoxycarbonylmethyl-2-thiouridine), and ncm5U (5-carbamoylmethyl uridine). The elongator complex catalyzes formation of carboxymethyluridine in the wobble base at position 34 in tRNAs. This chain is Elongator complex protein 6 homolog, found in Schizosaccharomyces pombe (strain 972 / ATCC 24843) (Fission yeast).